The chain runs to 412 residues: Putative competence-damage inducible protein (412 aa).

This sequence belongs to the CinA family.

The protein is Putative competence-damage inducible protein of Bacillus anthracis.